Reading from the N-terminus, the 269-residue chain is Large ribosomal subunit protein uL3m (269 aa).

The N-terminal 19 residues, 1–19 (MSKFLQGSIFSISKLHVRY), are a transit peptide targeting the mitochondrion.

The protein belongs to the universal ribosomal protein uL3 family. Component of the mitochondrial large ribosomal subunit (mt-LSU). Mature yeast 74S mitochondrial ribosomes consist of a small (37S) and a large (54S) subunit. The 37S small subunit contains a 15S ribosomal RNA (15S mt-rRNA) and 34 different proteins. The 54S large subunit contains a 21S rRNA (21S mt-rRNA) and 46 different proteins.

Its subcellular location is the mitochondrion. Component of the mitochondrial ribosome (mitoribosome), a dedicated translation machinery responsible for the synthesis of mitochondrial genome-encoded proteins, including at least some of the essential transmembrane subunits of the mitochondrial respiratory chain. The mitoribosomes are attached to the mitochondrial inner membrane and translation products are cotranslationally integrated into the membrane. The sequence is that of Large ribosomal subunit protein uL3m (MRPL9) from Saccharomyces cerevisiae (strain ATCC 204508 / S288c) (Baker's yeast).